Reading from the N-terminus, the 130-residue chain is Prefoldin subunit alpha (130 aa).

The protein belongs to the prefoldin subunit alpha family. Heterohexamer of two alpha and four beta subunits.

The protein resides in the cytoplasm. In terms of biological role, molecular chaperone capable of stabilizing a range of proteins. Seems to fulfill an ATP-independent, HSP70-like function in archaeal de novo protein folding. The polypeptide is Prefoldin subunit alpha (Thermoplasma volcanium (strain ATCC 51530 / DSM 4299 / JCM 9571 / NBRC 15438 / GSS1)).